A 640-amino-acid polypeptide reads, in one-letter code: Pro-neuregulin-1, membrane-bound isoform (640 aa).

A propeptide spanning residues Met1–Gly19 is cleaved from the precursor. The segment at Met1 to Leu53 is disordered. The Extracellular segment spans residues Ser20–Arg242. The Ig-like C2-type domain occupies Pro37–Thr128. A disulfide bridge connects residues Cys57 and Cys112. Residues Asn120, Asn126, and Asn164 are each glycosylated (N-linked (GlcNAc...) asparagine). The 45-residue stretch at His178 to Thr222 folds into the EGF-like domain. 3 disulfides stabilise this stretch: Cys182–Cys196, Cys190–Cys210, and Cys212–Cys221. The helical transmembrane segment at Val243–Cys265 threads the bilayer. The Cytoplasmic portion of the chain corresponds to Lys266–Val640. Over residues Thr334 to Thr350 the composition is skewed to low complexity. Disordered regions lie at residues Thr334–Thr360, Ser375–Arg399, Arg433–Val461, and Glu524–Phe588. A compositionally biased stretch (polar residues) spans Pro351–Thr360. A compositionally biased stretch (gly residues) spans Gly387–Gly397. Basic residues predominate over residues Ala542–Pro552. Low complexity predominate over residues Asp563–Glu574.

This sequence belongs to the neuregulin family. The cytoplasmic domain interacts with the LIM domain region of LIMK1. Forms a ternary complex with ERBB3 and ITGAV:ITGB3 or ITGA6:ITGB4. Interacts with NRDC and BACE1. Proteolytic cleavage close to the plasma membrane on the external face leads to the release of the soluble growth factor form. Post-translationally, N- and O-glycosylated. Extensive glycosylation precedes the proteolytic cleavage. Type I isoforms are the predominant forms expressed in the endocardium. Isoform alpha is expressed in breast, ovary, testis, prostate, heart, skeletal muscle, lung, placenta liver, kidney, salivary gland, small intestine and brain, but not in uterus, stomach, pancreas, and spleen. Isoform 3 is the predominant form in mesenchymal cells and in non-neuronal organs, whereas isoform 6 is the major neuronal form. Isoform 8 is expressed in spinal cord and brain. Isoform 9 is the major form in skeletal muscle cells; in the nervous system it is expressed in spinal cord and brain. Also detected in adult heart, placenta, lung, liver, kidney, and pancreas. Isoform 10 is expressed in nervous system: spinal cord motor neurons, dorsal root ganglion neurons, and brain. Predominant isoform expressed in sensory and motor neurons. Not detected in adult heart, placenta, lung, liver, skeletal muscle, kidney, and pancreas. Not expressed in fetal lung, liver and kidney. Type IV isoforms are brain-specific.

It localises to the cell membrane. It is found in the secreted. The protein localises to the nucleus. Its subcellular location is the membrane. Its function is as follows. Direct ligand for ERBB3 and ERBB4 tyrosine kinase receptors. Concomitantly recruits ERBB1 and ERBB2 coreceptors, resulting in ligand-stimulated tyrosine phosphorylation and activation of the ERBB receptors. The multiple isoforms perform diverse functions such as inducing growth and differentiation of epithelial, glial, neuronal, and skeletal muscle cells; inducing expression of acetylcholine receptor in synaptic vesicles during the formation of the neuromuscular junction; stimulating lobuloalveolar budding and milk production in the mammary gland and inducing differentiation of mammary tumor cells; stimulating Schwann cell proliferation; implication in the development of the myocardium such as trabeculation of the developing heart. Isoform 10 may play a role in motor and sensory neuron development. Binds to ERBB4. Binds to ERBB3. Acts as a ligand for integrins and binds (via EGF domain) to integrins ITGAV:ITGB3 or ITGA6:ITGB4. Its binding to integrins and subsequent ternary complex formation with integrins and ERRB3 are essential for NRG1-ERBB signaling. Induces the phosphorylation and activation of MAPK3/ERK1, MAPK1/ERK2 and AKT1. Ligand-dependent ERBB4 endocytosis is essential for the NRG1-mediated activation of these kinases in neurons. This Homo sapiens (Human) protein is Pro-neuregulin-1, membrane-bound isoform (NRG1).